Reading from the N-terminus, the 77-residue chain is P fimbrial regulatory protein KS71A (77 aa).

This is P fimbrial regulatory protein KS71A (KS71A) from Escherichia coli.